A 344-amino-acid polypeptide reads, in one-letter code: 4'-phosphopantetheinyl transferase NpgA (344 aa).

This sequence belongs to the P-Pant transferase superfamily.

It carries out the reaction apo-[ACP] + CoA = holo-[ACP] + adenosine 3',5'-bisphosphate + H(+). Transfers the 4'-phosphopantetheine moiety from coenzyme A to a Ser of an acyl-carrier-protein. The enzyme is able to transfer the cofactor to a broad range of enzymes with acyl- or peptidyl-carrier protein domains. Required for primary biological processes such as growth and asexual/sexual development, and activates target enzymes involved in the synthesis of metabolites such as fatty acids, polyketides and nonribosomal peptides, lysine, siderophore, penicillin, sterigmatocystin, shamixantone, dehydroaustinol, and pigments. The protein is 4'-phosphopantetheinyl transferase NpgA (npgA) of Emericella nidulans (strain FGSC A4 / ATCC 38163 / CBS 112.46 / NRRL 194 / M139) (Aspergillus nidulans).